We begin with the raw amino-acid sequence, 198 residues long: Endoribonuclease YbeY (198 aa).

Zn(2+)-binding residues include histidine 156, histidine 160, and histidine 166.

The protein belongs to the endoribonuclease YbeY family. It depends on Zn(2+) as a cofactor.

Its subcellular location is the cytoplasm. In terms of biological role, single strand-specific metallo-endoribonuclease involved in late-stage 70S ribosome quality control and in maturation of the 3' terminus of the 16S rRNA. The sequence is that of Endoribonuclease YbeY from Cupriavidus necator (strain ATCC 17699 / DSM 428 / KCTC 22496 / NCIMB 10442 / H16 / Stanier 337) (Ralstonia eutropha).